Consider the following 251-residue polypeptide: 4-hydroxy-tetrahydrodipicolinate reductase (251 aa).

NAD(+)-binding positions include glycine 8–methionine 13, glycine 76–threonine 78, and alanine 106–phenylalanine 109. The active-site Proton donor/acceptor is histidine 136. Histidine 137 is a (S)-2,3,4,5-tetrahydrodipicolinate binding site. Catalysis depends on lysine 140, which acts as the Proton donor. Glycine 146–threonine 147 contributes to the (S)-2,3,4,5-tetrahydrodipicolinate binding site.

The protein belongs to the DapB family.

The protein localises to the cytoplasm. The catalysed reaction is (S)-2,3,4,5-tetrahydrodipicolinate + NAD(+) + H2O = (2S,4S)-4-hydroxy-2,3,4,5-tetrahydrodipicolinate + NADH + H(+). It carries out the reaction (S)-2,3,4,5-tetrahydrodipicolinate + NADP(+) + H2O = (2S,4S)-4-hydroxy-2,3,4,5-tetrahydrodipicolinate + NADPH + H(+). The protein operates within amino-acid biosynthesis; L-lysine biosynthesis via DAP pathway; (S)-tetrahydrodipicolinate from L-aspartate: step 4/4. Catalyzes the conversion of 4-hydroxy-tetrahydrodipicolinate (HTPA) to tetrahydrodipicolinate. This chain is 4-hydroxy-tetrahydrodipicolinate reductase, found in Bifidobacterium longum subsp. infantis (strain ATCC 15697 / DSM 20088 / JCM 1222 / NCTC 11817 / S12).